The primary structure comprises 257 residues: RING1 and YY1-binding protein B (257 aa).

2 disordered regions span residues 1 to 24 and 45 to 257; these read MGDK…GFWD and RKGT…DESF. A RanBP2-type zinc finger spans residues 19 to 48; the sequence is DNGFWDCSVCTFRNSAEAFKCSICDVRKGT. Residues 74–129 are compositionally biased toward basic and acidic residues; it reads PKKEKKEKPERPEKDRAEEERPDINPPDEHPVEQRDKDKSEKEQPEKEKKDREKEI. Residues 149 to 168 show a composition bias toward polar residues; the sequence is HQSPPSERNSIQSGKSTTKT. Over residues 169–178 the composition is skewed to basic residues; that stretch reads KNSHNSRPKL. The span at 209 to 233 shows a compositional bias: low complexity; sequence TSSTSSSTVTSSASSEQQHQSSGSE.

It localises to the nucleus. The protein localises to the cytoplasm. Its function is as follows. May be implicated in the regulation of the transcription as a repressor of the transcriptional activity of E4TF1. This Danio rerio (Zebrafish) protein is RING1 and YY1-binding protein B (rybpb).